The following is a 150-amino-acid chain: uncharacterized protein (150 aa).

In terms of domain architecture, Flavodoxin-like spans 4-148 (LILYKSIHHK…KAKEFAKSIL (145 aa)).

This is an uncharacterized protein from Methanocaldococcus jannaschii (strain ATCC 43067 / DSM 2661 / JAL-1 / JCM 10045 / NBRC 100440) (Methanococcus jannaschii).